Consider the following 390-residue polypeptide: Dihydroorotase (390 aa).

Zn(2+)-binding residues include His54 and His56. Residues 56–58 (HIR) and Asn88 each bind substrate. Zn(2+) contacts are provided by Lys136, His160, His197, and Asp259. Residue Lys136 is modified to N6-carboxylysine. Asp259 is a catalytic residue. Substrate contacts are provided by residues His263 and 277–278 (PG).

It belongs to the metallo-dependent hydrolases superfamily. DHOase family. Class I DHOase subfamily. Zn(2+) serves as cofactor.

It carries out the reaction (S)-dihydroorotate + H2O = N-carbamoyl-L-aspartate + H(+). It participates in pyrimidine metabolism; UMP biosynthesis via de novo pathway; (S)-dihydroorotate from bicarbonate: step 3/3. Functionally, catalyzes the reversible cyclization of carbamoyl aspartate to dihydroorotate. This is Dihydroorotase from Saccharolobus solfataricus (strain ATCC 35092 / DSM 1617 / JCM 11322 / P2) (Sulfolobus solfataricus).